The chain runs to 67 residues: Probable Sec-independent protein translocase protein TatE (67 aa).

A helical transmembrane segment spans residues 1–21 (MEGISIAKLLIIGALIVLLFG). A disordered region spans residues 46 to 67 (EDTSATRTTAEDVPAERVVHKD).

This sequence belongs to the TatA/E family. TatE subfamily.

It localises to the cell inner membrane. Its function is as follows. Part of the twin-arginine translocation (Tat) system that transports large folded proteins containing a characteristic twin-arginine motif in their signal peptide across membranes. TatE shares overlapping functions with TatA. In Pantoea vagans (strain C9-1) (Pantoea agglomerans (strain C9-1)), this protein is Probable Sec-independent protein translocase protein TatE.